Reading from the N-terminus, the 457-residue chain is Squalene epoxidase erg1 (457 aa).

Residues 15–16 (IT), 35–36 (ER), Arg-43, Arg-114, Val-130, Asp-293, and Met-306 each bind FAD. Transmembrane regions (helical) follow at residues 347 to 364 (GYSF…KLFT), 409 to 429 (FYAV…ALLM), and 433 to 453 (IIES…YILS).

It belongs to the squalene monooxygenase family. FAD serves as cofactor.

It localises to the microsome membrane. Its subcellular location is the endoplasmic reticulum membrane. The protein resides in the vacuole membrane. It carries out the reaction squalene + reduced [NADPH--hemoprotein reductase] + O2 = (S)-2,3-epoxysqualene + oxidized [NADPH--hemoprotein reductase] + H2O + H(+). It participates in terpene metabolism; lanosterol biosynthesis; lanosterol from farnesyl diphosphate: step 2/3. The protein operates within steroid metabolism; ergosterol biosynthesis. Its activity is regulated as follows. Activity is blocked by the allylamine class antifungal terbinafine. Functionally, squalene epoxidase; part of the third module of ergosterol biosynthesis pathway that includes by the late steps of the pathway. Erg1 catalyzes the epoxidation of squalene into 2,3-epoxysqualene. The third module or late pathway involves the ergosterol synthesis itself through consecutive reactions that mainly occur in the endoplasmic reticulum (ER) membrane. Firstly, the squalene synthase erg9 catalyzes the condensation of 2 farnesyl pyrophosphate moieties to form squalene, which is the precursor of all steroids. Secondly, squalene is converted into lanosterol by the consecutive action of the squalene epoxidase erg1 and the lanosterol synthase erg7. The lanosterol 14-alpha-demethylase erg11/cyp1 catalyzes C14-demethylation of lanosterol to produce 4,4'-dimethyl cholesta-8,14,24-triene-3-beta-ol. In the next steps, a complex process involving various demethylation, reduction and desaturation reactions catalyzed by the C-14 reductase erg24 and the C-4 demethylation complex erg25-erg26-erg27 leads to the production of zymosterol. Erg28 likely functions in the C-4 demethylation complex reaction by tethering erg26 and Erg27 to the endoplasmic reticulum or to facilitate interaction between these proteins. Then, the sterol 24-C-methyltransferase erg6 catalyzes the methyl transfer from S-adenosyl-methionine to the C-24 of zymosterol to form fecosterol. The C-8 sterol isomerase erg2 catalyzes the reaction which results in unsaturation at C-7 in the B ring of sterols and thus converts fecosterol to episterol. The sterol-C5-desaturases erg31 and erg32 then catalyze the introduction of a C-5 double bond in the B ring to produce 5-dehydroepisterol. The C-22 sterol desaturase erg5 further converts 5-dehydroepisterol into ergosta-5,7,22,24(28)-tetraen-3beta-ol by forming the C-22(23) double bond in the sterol side chain. Finally, ergosta-5,7,22,24(28)-tetraen-3beta-ol is substrate of the C-24(28) sterol reductase erg4 to produce ergosterol. In the genus Schizosaccharomyces, a second route exists between lanosterol and fecosterol, via the methylation of lanosterol to eburicol by erg6, followed by C14-demethylation by erg11/cyp1 and C4-demethylation by the demethylation complex erg25-erg26-erg27. This Schizosaccharomyces pombe (strain 972 / ATCC 24843) (Fission yeast) protein is Squalene epoxidase erg1.